The following is a 35-amino-acid chain: Conotoxin Cl6.16 (35 aa).

Cystine bridges form between Cys10–Cys22, Cys16–Cys27, and Cys21–Cys34.

Expressed by the venom duct.

Its subcellular location is the secreted. The sequence is that of Conotoxin Cl6.16 from Californiconus californicus (California cone).